Reading from the N-terminus, the 416-residue chain is Glutamyl-tRNA reductase (416 aa).

Substrate-binding positions include 49–52, Ser-105, 110–112, and Gln-116; these read TCNR and EPQ. Cys-50 serves as the catalytic Nucleophile. 185 to 190 serves as a coordination point for NADP(+); the sequence is GAGETI.

Belongs to the glutamyl-tRNA reductase family. As to quaternary structure, homodimer.

It catalyses the reaction (S)-4-amino-5-oxopentanoate + tRNA(Glu) + NADP(+) = L-glutamyl-tRNA(Glu) + NADPH + H(+). It functions in the pathway porphyrin-containing compound metabolism; protoporphyrin-IX biosynthesis; 5-aminolevulinate from L-glutamyl-tRNA(Glu): step 1/2. In terms of biological role, catalyzes the NADPH-dependent reduction of glutamyl-tRNA(Glu) to glutamate 1-semialdehyde (GSA). The polypeptide is Glutamyl-tRNA reductase (Shewanella halifaxensis (strain HAW-EB4)).